The primary structure comprises 1212 residues: Solute carrier family 12 member 2 (1212 aa).

Methionine 1 carries the N-acetylmethionine modification. The Cytoplasmic portion of the chain corresponds to 1 to 286; that stretch reads MEPRPTAPSS…AESKGVVKFG (286 aa). Disordered regions lie at residues 36–81, 112–138, and 150–193; these read GTAV…QSRF, GAKQ…AKGR, and SSAE…GGGS. Phosphoserine occurs at positions 77 and 79. The short motif at 80-83 is the RFXV motif 1 element; that stretch reads RFQV. The span at 127 to 137 shows a compositional bias: basic and acidic residues; it reads EPAKGSEEAKG. The RFXV motif 2 signature appears at 138 to 141; sequence RFRV. A compositionally biased stretch (low complexity) spans 150-160; it reads SSAEDSLSDAA. A phosphothreonine; by OXSR1 and STK39 mark is found at threonine 203, threonine 207, and threonine 212. A phosphothreonine mark is found at threonine 217 and threonine 230. Serine 242 is modified (phosphoserine). The residue at position 266 (threonine 266) is a Phosphothreonine. Residues 287-316 traverse the membrane as a discontinuously helical segment; sequence WIKGVLVRCMLNIWGVMLFIRLSWIVGQAG. Leucine 297 is a Na(+) binding site. Asparagine 298 and isoleucine 299 together coordinate K(+). Tryptophan 300 contributes to the Na(+) binding site. Chloride is bound by residues glycine 301, valine 302, and methionine 303. The helical transmembrane segment at 317 to 336 threads the bilayer; that stretch reads IGLSVLVIMMATVVTTITGL. The Cytoplasmic segment spans residues 337-367; that stretch reads STSAIATNGFVRGGGAYYLISRSLGPEFGGA. A helical transmembrane segment spans residues 368–395; it reads IGLIFAFANAVAVAMYVVGFAETVVELL. Phenylalanine 372 is a binding site for chloride. Tyrosine 383 is a binding site for K(+). Over 396 to 405 the chain is Extracellular; the sequence is KEHSILMIDE. A helical transmembrane segment spans residues 406 to 429; sequence INDIRIIGAITVVILLGISVAGME. Residues 430-432 lie on the Cytoplasmic side of the membrane; the sequence is WEA. The chain crosses the membrane as a helical span at residues 433-454; that stretch reads KAQIVLLVILLLAIGDFVIGTF. The Extracellular segment spans residues 455–486; the sequence is IPLESKKPKGFFGYKSEIFNENFGPDFREEET. The discontinuously helical transmembrane segment at 487–504 threads the bilayer; that stretch reads FFSVFAIFFPAATGILAG. 3 residues coordinate K(+): proline 496, alanine 497, and threonine 499. Positions 496 and 497 each coordinate chloride. Chloride-binding residues include glycine 500 and isoleucine 501. At 505 to 519 the chain is on the cytoplasmic side; sequence ANISGDLADPQSAIP. A helical membrane pass occupies residues 520–541; the sequence is KGTLLAILITTLVYVGIAVSVG. At 542-598 the chain is on the extracellular side; it reads SCVVRDATGNVNDTIVTELTNCTSAACKLNFDFSSCESSPCSYGLMNNFQVMSMVSG. 2 N-linked (GlcNAc...) asparagine glycosylation sites follow: asparagine 553 and asparagine 562. Cystine bridges form between cysteine 563–cysteine 568 and cysteine 577–cysteine 582. Residues 599–623 traverse the membrane as a helical segment; sequence FTPLISAGIFSATLSSALASLVSAP. The Na(+) site is built by alanine 610, serine 613, and serine 614. Over 624 to 651 the chain is Cytoplasmic; sequence KIFQALCKDNIYPAFQMFAKGYGKNNEP. The next 2 membrane-spanning stretches (helical) occupy residues 652–672 and 673–691; these read LRGY…AELN and VIAP…LINF. Chloride is bound by residues phenylalanine 682 and tyrosine 686. At 692 to 714 the chain is on the cytoplasmic side; sequence SVFHASLAKSPGWRPAFKYYNMW. Transmembrane regions (helical) follow at residues 715-732 and 733-745; these read ISLL…VINW and WAAL…VLGL. Residues 746 to 1212 lie on the Cytoplasmic side of the membrane; sequence YIYVTYKKPD…NHQSVLTFYS (467 aa). The segment at 761 to 778 is scissor helix; it reads STQALTYLNALQHSIRLS. A phosphoserine mark is found at serine 940 and serine 944. Residues 962 to 978 show a composition bias toward basic and acidic residues; it reads LDTSKPLSEKPITHKVE. The disordered stretch occupies residues 962–989; it reads LDTSKPLSEKPITHKVEEEDGKTATQPL. Serine 994 is modified (phosphoserine).

It belongs to the SLC12A transporter family. As to quaternary structure, homodimer; adopts a domain-swap conformation at the scissor helices connecting the transmembrane domain and C-terminal domain. In terms of processing, phosphorylated at Thr-203, Thr-207 and Thr-212 by OXSR1/OSR1 and STK39/SPAK downstream of WNK kinases (WNK1, WNK2, WNK3 or WNK4), promoting its activity. As to expression, expressed in many tissues.

The protein resides in the basolateral cell membrane. The catalysed reaction is K(+)(out) + 2 chloride(out) + Na(+)(out) = K(+)(in) + 2 chloride(in) + Na(+)(in). Activated following phosphorylation by OXSR1/OSR1 and STK39/SPAK downstream of WNK kinases (WNK1, WNK2, WNK3 or WNK4). Inhibited by bumetanide. Inhibited by furosemide. Functionally, cation-chloride cotransporter which mediates the electroneutral transport of chloride, potassium and/or sodium ions across the membrane. Plays a vital role in the regulation of ionic balance and cell volume. In Homo sapiens (Human), this protein is Solute carrier family 12 member 2 (SLC12A2).